The sequence spans 402 residues: Nicotinate phosphoribosyltransferase (402 aa).

His224 carries the phosphohistidine; by autocatalysis modification.

Belongs to the NAPRTase family. Post-translationally, transiently phosphorylated on a His residue during the reaction cycle. Phosphorylation strongly increases the affinity for substrates and increases the rate of nicotinate D-ribonucleotide production. Dephosphorylation regenerates the low-affinity form of the enzyme, leading to product release.

The catalysed reaction is nicotinate + 5-phospho-alpha-D-ribose 1-diphosphate + ATP + H2O = nicotinate beta-D-ribonucleotide + ADP + phosphate + diphosphate. It participates in cofactor biosynthesis; NAD(+) biosynthesis; nicotinate D-ribonucleotide from nicotinate: step 1/1. In terms of biological role, catalyzes the synthesis of beta-nicotinate D-ribonucleotide from nicotinate and 5-phospho-D-ribose 1-phosphate at the expense of ATP. This is Nicotinate phosphoribosyltransferase from Neisseria meningitidis serogroup A / serotype 4A (strain DSM 15465 / Z2491).